The chain runs to 887 residues: Alanine--tRNA ligase (887 aa).

4 residues coordinate Zn(2+): H579, H583, C681, and H685.

This sequence belongs to the class-II aminoacyl-tRNA synthetase family. Requires Zn(2+) as cofactor.

The protein resides in the cytoplasm. It catalyses the reaction tRNA(Ala) + L-alanine + ATP = L-alanyl-tRNA(Ala) + AMP + diphosphate. Catalyzes the attachment of alanine to tRNA(Ala) in a two-step reaction: alanine is first activated by ATP to form Ala-AMP and then transferred to the acceptor end of tRNA(Ala). Also edits incorrectly charged Ser-tRNA(Ala) and Gly-tRNA(Ala) via its editing domain. The polypeptide is Alanine--tRNA ligase (Flavobacterium psychrophilum (strain ATCC 49511 / DSM 21280 / CIP 103535 / JIP02/86)).